Reading from the N-terminus, the 271-residue chain is DNA-directed RNA polymerase subunit Rpo3 (271 aa).

Belongs to the archaeal Rpo3/eukaryotic RPB3 RNA polymerase subunit family. Part of the RNA polymerase complex.

The protein localises to the cytoplasm. It carries out the reaction RNA(n) + a ribonucleoside 5'-triphosphate = RNA(n+1) + diphosphate. DNA-dependent RNA polymerase (RNAP) catalyzes the transcription of DNA into RNA using the four ribonucleoside triphosphates as substrates. The sequence is that of DNA-directed RNA polymerase subunit Rpo3 from Thermoplasma volcanium (strain ATCC 51530 / DSM 4299 / JCM 9571 / NBRC 15438 / GSS1).